Reading from the N-terminus, the 600-residue chain is ATP-dependent lipid A-core flippase (600 aa).

Helical transmembrane passes span 26–46 (VGIF…QPML), 82–102 (LLIV…NYFL), 167–187 (VFLF…MLAI), and 266–286 (PMLQ…VLFL). Residues 30-321 (LLSIIGFVIF…LSEVSSTIQK (292 aa)) enclose the ABC transmembrane type-1 domain. The ABC transporter domain maps to 353–589 (LEVKNLSFFY…NGYYARLHAM (237 aa)). 387–394 (GRSGSGKS) is an ATP binding site.

It belongs to the ABC transporter superfamily. Lipid exporter (TC 3.A.1.106) family. In terms of assembly, homodimer.

The protein localises to the cell inner membrane. The enzyme catalyses ATP + H2O + lipid A-core oligosaccharideSide 1 = ADP + phosphate + lipid A-core oligosaccharideSide 2.. Its function is as follows. Involved in lipopolysaccharide (LPS) biosynthesis. Translocates lipid A-core from the inner to the outer leaflet of the inner membrane. Transmembrane domains (TMD) form a pore in the inner membrane and the ATP-binding domain (NBD) is responsible for energy generation. The sequence is that of ATP-dependent lipid A-core flippase from Pseudomonas savastanoi pv. phaseolicola (strain 1448A / Race 6) (Pseudomonas syringae pv. phaseolicola (strain 1448A / Race 6)).